A 289-amino-acid chain; its full sequence is Type II methyltransferase M.MjaIII (289 aa).

Residues tryptophan 9, lysine 13, aspartate 63, and aspartate 199 each coordinate S-adenosyl-L-methionine.

The protein belongs to the N(4)/N(6)-methyltransferase family.

It catalyses the reaction a 2'-deoxyadenosine in DNA + S-adenosyl-L-methionine = an N(6)-methyl-2'-deoxyadenosine in DNA + S-adenosyl-L-homocysteine + H(+). An alpha subtype methylase that recognizes the double-stranded sequence 5'-GATC-3', methylates A-2 on both strands, and protects the DNA from cleavage by the MjaIII endonuclease. The chain is Type II methyltransferase M.MjaIII (mjaIIIM) from Methanocaldococcus jannaschii (strain ATCC 43067 / DSM 2661 / JAL-1 / JCM 10045 / NBRC 100440) (Methanococcus jannaschii).